A 77-amino-acid chain; its full sequence is Acyl carrier protein (77 aa).

A Carrier domain is found at 2–77 (SNIEERVKKI…AAIDYVSKNQ (76 aa)). The residue at position 37 (Ser37) is an O-(pantetheine 4'-phosphoryl)serine.

This sequence belongs to the acyl carrier protein (ACP) family. In terms of processing, 4'-phosphopantetheine is transferred from CoA to a specific serine of apo-ACP by AcpS. This modification is essential for activity because fatty acids are bound in thioester linkage to the sulfhydryl of the prosthetic group.

It is found in the cytoplasm. The protein operates within lipid metabolism; fatty acid biosynthesis. In terms of biological role, carrier of the growing fatty acid chain in fatty acid biosynthesis. The sequence is that of Acyl carrier protein from Shewanella oneidensis (strain ATCC 700550 / JCM 31522 / CIP 106686 / LMG 19005 / NCIMB 14063 / MR-1).